A 261-amino-acid polypeptide reads, in one-letter code: MELKIGRAIIKKGLEVLYEYSDVDVAIVGAGPSGLTAARYLAEKGFKVLVFERRFSFGGGIGPGGNMLPSIVVQEEALPILRDFKVRYQPAGDGLYTVDPAELIAKLAAGAIDAGAKIILGVHVDDVIFRGDPPRVAGLLWIWTPIQMSGMHVDPLYTMAKAVIDATGHDAEVISVAARKVPELGIQLPGEKSAWSEVSEKLVVEYTGKVAPGLYVTGMAVAAVHGLPRMGPIFGGMMLSGKKIAEIVAKDLAEEAYALRA.

Residues Ser33, 52 to 53 (ER), Gly60, Val124, and 152 to 154 (HVD) contribute to the NAD(+) site. Fe cation-binding residues include Asp154 and His169. An NAD(+)-binding site is contributed by Met219. Arg229 is a binding site for glycine.

It belongs to the THI4 family. As to quaternary structure, homooctamer; tetramer of dimers. Fe(2+) is required as a cofactor.

The catalysed reaction is hydrogen sulfide + glycine + NAD(+) = ADP-5-ethyl-4-methylthiazole-2-carboxylate + nicotinamide + 3 H2O + H(+). The protein operates within cofactor biosynthesis; thiamine diphosphate biosynthesis. In terms of biological role, involved in the biosynthesis of the thiazole moiety of thiamine. Catalyzes the conversion of NAD and glycine to adenosine diphosphate 5-(2-hydroxyethyl)-4-methylthiazole-2-carboxylate (ADT), an adenylated thiazole intermediate, using free sulfide as a source of sulfur. In Pyrobaculum arsenaticum (strain DSM 13514 / JCM 11321 / PZ6), this protein is Thiamine thiazole synthase.